A 226-amino-acid chain; its full sequence is Ribonuclease 3 (226 aa).

In terms of domain architecture, RNase III spans 6–128; it reads INRLQRKLGY…LIGAIFLDSD (123 aa). Glu41 is a binding site for Mg(2+). The active site involves Asp45. Mg(2+)-binding residues include Asp114 and Glu117. Glu117 is a catalytic residue. Positions 155–225 constitute a DRBM domain; the sequence is DPKTRLQEYL…AEQALKQLEL (71 aa).

This sequence belongs to the ribonuclease III family. Homodimer. The cofactor is Mg(2+).

The protein localises to the cytoplasm. It catalyses the reaction Endonucleolytic cleavage to 5'-phosphomonoester.. Its function is as follows. Digests double-stranded RNA. Involved in the processing of primary rRNA transcript to yield the immediate precursors to the large and small rRNAs (23S and 16S). Processes some mRNAs, and tRNAs when they are encoded in the rRNA operon. Processes pre-crRNA and tracrRNA of type II CRISPR loci if present in the organism. In Photorhabdus laumondii subsp. laumondii (strain DSM 15139 / CIP 105565 / TT01) (Photorhabdus luminescens subsp. laumondii), this protein is Ribonuclease 3.